Reading from the N-terminus, the 638-residue chain is LIM domain kinase 2 (638 aa).

LIM zinc-binding domains are found at residues 12–63 (CRGC…CHKD) and 72–124 (CHGC…CGKC). Residues 152 to 239 (LISMPATTEC…TLQLLIEHDP (88 aa)) form the PDZ domain. T210 is modified (phosphothreonine). A disordered region spans residues 255 to 304 (PHMQSTGHTLMLSTLDTKENQEGTLRRRSLRRSNSISKSPGPSSPKEPLL). Over residues 257 to 269 (MQSTGHTLMLSTL) the composition is skewed to polar residues. Positions 270–279 (DTKENQEGTL) are enriched in basic and acidic residues. The span at 286–304 (RSNSISKSPGPSSPKEPLL) shows a compositional bias: low complexity. 2 positions are modified to phosphoserine: S293 and S298. The region spanning 331-608 (LIHGEVLGKG…DSFEALSLFL (278 aa)) is the Protein kinase domain. ATP is bound by residues 337-345 (LGKGFFGQA) and K360. Residue D451 is part of the active site. Position 505 is a phosphothreonine; by ROCK1 and CDC42BP (T505).

Belongs to the protein kinase superfamily. TKL Ser/Thr protein kinase family. As to quaternary structure, binds ROCK1 and MARF1. Interacts with NISCH. Post-translationally, phosphorylated on serine and/or threonine residues by ROCK1. As to expression, specifically expressed in the testes.

Its subcellular location is the cytoplasm. The protein localises to the cytoskeleton. The protein resides in the spindle. It is found in the microtubule organizing center. It localises to the centrosome. Its subcellular location is the nucleus. The protein localises to the perinuclear region. The catalysed reaction is L-seryl-[protein] + ATP = O-phospho-L-seryl-[protein] + ADP + H(+). It catalyses the reaction L-threonyl-[protein] + ATP = O-phospho-L-threonyl-[protein] + ADP + H(+). Serine/threonine-protein kinase that plays an essential role in the regulation of actin filament dynamics. Acts downstream of several Rho family GTPase signal transduction pathways. Involved in astral microtubule organization and mitotic spindle orientation during early stages of mitosis by mediating phosphorylation of TPPP. Displays serine/threonine-specific phosphorylation of myelin basic protein and histone (MBP) in vitro. Suppresses ciliogenesis via multiple pathways; phosphorylation of CFL1, suppression of directional trafficking of ciliary vesicles to the ciliary base, and by facilitating YAP1 nuclear localization where it acts as a transcriptional corepressor of the TEAD4 target genes AURKA and PLK1. This Mus musculus (Mouse) protein is LIM domain kinase 2 (Limk2).